The primary structure comprises 181 residues: ADP-ribosylation factor 1 (181 aa).

Glycine 2 is lipidated: N-myristoyl glycine. GTP-binding positions include 24 to 31 (GLDAAGKT), 126 to 129 (NKQD), and alanine 160.

It belongs to the small GTPase superfamily. Arf family. In terms of assembly, may interact with GTPase RAB5b.

Its subcellular location is the golgi apparatus membrane. It catalyses the reaction GTP + H2O = GDP + phosphate + H(+). Its activity is regulated as follows. Alternates between an inactive GDP-bound form and an active GTP-bound form. Intrinsic GTPase activity is almost undetectable in vitro. Activated by a guanine nucleotide-exchange factor (GEF) and inactivated by GTPase-activating protein ARFGAP1. Its function is as follows. Small GTPase involved in protein trafficking between different compartments. Modulates vesicle budding and uncoating within the Golgi complex. In its GTP-bound form, triggers the recruitment of coatomer proteins to the Golgi membrane. The hydrolysis of ARF1-bound GTP, which is mediated by ARFGAPs proteins, is required for dissociation of coat proteins from Golgi membranes and vesicles. Regulates the transport of N-acylated AK2 to the parasitophorous vacuole membrane. May be involved in the activation of lipid kinase PIP5K. In Plasmodium falciparum (isolate NF54), this protein is ADP-ribosylation factor 1 (ARF1).